A 587-amino-acid chain; its full sequence is MMSSSYWSETSSSSCGTQQPTEVLQCQPQHYHYYHQPSQAQQPPEKNVVYERVRTYSGPMNKVVQALDPLGSREVLSPLKPASSYQSLVWSDHSQELYSPTLKISTCAPSTLHITQNAEQELHSPTVKVTTYPQTTIRRYIVQNPEQEPLSPFLRGSQFFPGNNVIYEKTIRKVEKLNTDQECCPQIQCHHHVIQQPQIIHSPHCQQSHSSHQIQCITENDSNIGHELCHGGPSQIHEQVIIQDDGPEKLDPKYFGELLADLSRKNTDLYHCLLEHLERIGGSKQDFESTDTSEDIESLIPKGLSEFTKQQIRYILQMRGMSDKSLRLVLSTFSNIREELGHLQNDLTSLENDKIRLEKDLAFKENQMKEYEELLASVRANNRQQQQGLQDSSAKCQSLEENNLSLRHTLSDLEYRLKELEYCKRNLEQENKNLRIQVSETCTGPTLQAKMDEIGNHYMEMVKNLRLDKDREISKLRSQLNQYQKDVSKREGSCSDFQFKLHELTSLLEEKDSLIKRQSEELSKLRQEIYSSHNQPSCGGRTTITTKKYRTQYPILGLLYDDYEYIPPGSDTQTIVIEKTEDKWTCP.

Positions 331–529 (STFSNIREEL…EELSKLRQEI (199 aa)) form a coiled coil.

As to quaternary structure, interacts with nonmuscle actin. Expression absent in adult ovary.

The protein resides in the cell junction. The protein localises to the tight junction. Plays a key role in the organization of epithelial monolayers by regulating the actin cytoskeleton. May be involved in ovary development. The polypeptide is Protein POF1B (Pof1b) (Mus musculus (Mouse)).